The chain runs to 292 residues: Insulin-like growth factor-binding protein 3 (292 aa).

Positions 1 to 27 (MHPARPALWAAALTALTLLRGPPVARA) are cleaved as a signal peptide. Residues 36 to 119 (PVVRCEPCDA…LNGRGFCANA (84 aa)) form the IGFBP N-terminal domain. Intrachain disulfides connect C40–C69, C43–C71, C51–C72, C60–C75, C83–C96, and C90–C116. 2 N-linked (GlcNAc...) asparagine glycosylation sites follow: N118 and N137. Disordered stretches follow at residues 128-152 (YLPS…SVES) and 178-212 (KGHA…TEYG). The residue at position 149 (S149) is a Phosphoserine. Over residues 178 to 191 (KGHARDSQRYKVDY) the composition is skewed to basic and acidic residues. Polar residues predominate over residues 192 to 203 (ESQSTDTQNFSS). A glycan (N-linked (GlcNAc...) asparagine) is linked at N200. Residue S202 is modified to Phosphoserine. In terms of domain architecture, Thyroglobulin type-1 spans 211 to 286 (YGPCRREMED…DTKGKDDVHC (76 aa)). Disulfide bonds link C214-C241, C252-C263, and C265-C286.

In terms of assembly, interacts with XLKD1. Binds IGF2 more than IGF1. Forms a ternary complex of about 140 to 150 kDa with IGF1 or IGF2 and a 85 kDa glycoprotein (ALS). Interacts with TMEM219. Phosphorylated by FAM20C in the extracellular medium.

It localises to the secreted. IGF-binding proteins prolong the half-life of the IGFs and have been shown to either inhibit or stimulate the growth promoting effects of the IGFs on cell culture. They alter the interaction of IGFs with their cell surface receptors. Also exhibits IGF-independent antiproliferative and apoptotic effects mediated by its receptor TMEM219/IGFBP-3R. Promotes testicular germ cell apoptosis. The polypeptide is Insulin-like growth factor-binding protein 3 (Igfbp3) (Mus musculus (Mouse)).